The primary structure comprises 147 residues: Epididymal secretory protein E3-alpha (147 aa).

The N-terminal stretch at Met1–Ser25 is a signal peptide.

In terms of tissue distribution, epididymis, with predominant expression in the corpus region. Moderately expressed in the vas deferens; only low levels are detectable in the caput and cauda regions.

It is found in the secreted. In terms of biological role, possible function in sperm maturation. The sequence is that of Epididymal secretory protein E3-alpha (EDDM3A) from Homo sapiens (Human).